The primary structure comprises 393 residues: Asparagine--oxo-acid transaminase (393 aa).

L-asparagine-binding residues include Gly39, Trp126, and Asn176. N6-(pyridoxal phosphate)lysine is present on Lys239. Arg370 provides a ligand contact to L-asparagine.

The protein belongs to the class-I pyridoxal-phosphate-dependent aminotransferase family. Requires pyridoxal 5'-phosphate as cofactor.

The enzyme catalyses a 2-oxocarboxylate + L-asparagine = 2-oxosuccinamate + an L-alpha-amino acid. The catalysed reaction is L-asparagine + 2-oxoglutarate = 2-oxosuccinamate + L-glutamate. Catalyzes the transamination reaction between L-asparagine and 2-oxoglutarate to produce L-glutamate and 2-oxosuccinamate. Is not active with pyruvate as amine acceptor. May also use other amino acids as substrates. In Streptococcus mutans serotype c (strain ATCC 700610 / UA159), this protein is Asparagine--oxo-acid transaminase.